The chain runs to 233 residues: MKQSTVFTLLLLLIGMAAYSFGWVQAVAEAAAQYVQMINNDAVRLGLLACTAALLMLPAFLYLHYVTQSVKNMTAAFQKLTQSHQSCCDFQQHNLCSRYAEDVKSLRDSYKNVRQTYVMAAVLCQVIIFGCMFEIVKAVPFRLHTPPAFSMGLAMLLILYLLFCMRTYLRQLFRHGSLFRKVFAGALAAAGIWWMLSFSISELLFLIILAAIQQIGSFIYKRFSYHSTASLDL.

The next 6 membrane-spanning stretches (helical) occupy residues 7-27 (FTLL…VQAV), 46-66 (GLLA…LHYV), 116-136 (TYVM…FEIV), 145-165 (TPPA…LFCM), 176-198 (GSLF…MLSF), and 203-220 (LLFL…SFIY).

It localises to the cell membrane. Functionally, involved in the production of the bacteriocin subtilosin. This Bacillus subtilis (strain 168) protein is Antilisterial bacteriocin subtilosin biosynthesis protein AlbG (albG).